Here is a 233-residue protein sequence, read N- to C-terminus: Ribonuclease 3 (233 aa).

Positions 9–136 (LQHFWEQFHL…IIGSVYLSGG (128 aa)) constitute an RNase III domain. E49 lines the Mg(2+) pocket. The active site involves D53. Residues D122 and E125 each coordinate Mg(2+). E125 is a catalytic residue. The DRBM domain maps to 162 to 231 (DSKSALQEFV…ARAALALLKV (70 aa)).

It belongs to the ribonuclease III family. Homodimer. The cofactor is Mg(2+).

It is found in the cytoplasm. The enzyme catalyses Endonucleolytic cleavage to 5'-phosphomonoester.. Functionally, digests double-stranded RNA. Involved in the processing of primary rRNA transcript to yield the immediate precursors to the large and small rRNAs (23S and 16S). Processes some mRNAs, and tRNAs when they are encoded in the rRNA operon. Processes pre-crRNA and tracrRNA of type II CRISPR loci if present in the organism. This is Ribonuclease 3 from Moorella thermoacetica (strain ATCC 39073 / JCM 9320).